We begin with the raw amino-acid sequence, 782 residues long: LPS-assembly protein LptD (782 aa).

Residues 1 to 23 form the signal peptide; it reads MNKKHTLISLAILTALYSQQSLA.

This sequence belongs to the LptD family. Component of the lipopolysaccharide transport and assembly complex. Interacts with LptE and LptA.

The protein resides in the cell outer membrane. Together with LptE, is involved in the assembly of lipopolysaccharide (LPS) at the surface of the outer membrane. The sequence is that of LPS-assembly protein LptD from Haemophilus influenzae (strain 86-028NP).